The following is a 202-amino-acid chain: High mobility group protein B3 (202 aa).

2 consecutive DNA-binding regions (HMG box) follow at residues 9-79 (PKGK…KDYG) and 93-161 (PKRP…ADYK). Residues Cys-23 and Cys-45 each carry the cysteine sulfonic acid (-SO3H); alternate modification. An intrachain disulfide couples Cys-23 to Cys-45. The interval 71–98 (YDREMKDYGPAKGGKKKKDPNAPKRPPS) is disordered. Residue Cys-104 is modified to Cysteine sulfonic acid (-SO3H). The segment at 161 to 202 (KSKGKFDGAKGAATKAARKKVEEEDEEEEEDEEEEDEDDDDE) is disordered. A compositionally biased stretch (acidic residues) spans 183–202 (EEDEEEEEDEEEEDEDDDDE).

Belongs to the HMGB family. Reduction/oxidation of cysteine residues Cys-23, Cys-45 and Cys-104 and a possible intramolecular disulfide bond involving Cys-23 and Cys-45 give rise to different redox forms with specific functional activities in various cellular compartments: 1- fully reduced HMGB3 (HMGB3C23hC45hC104h), 2- disulfide HMGB3 (HMGB3C23-C45C104h) and 3- sulfonyl HMGB3 (HMGB3C23soC45soC104so).

It is found in the nucleus. It localises to the chromosome. Its subcellular location is the cytoplasm. In terms of biological role, multifunctional protein with various roles in different cellular compartments. May act in a redox sensitive manner. Associates with chromatin and binds DNA with a preference for non-canonical DNA structures such as single-stranded DNA. Can bend DNA and enhance DNA flexibility by looping thus providing a mechanism to promote activities on various gene promoters. Binds to the delta-1 crystallin/ASL1 enhancer. Proposed to be involved in the innate immune response to nucleic acids by acting as a cytoplasmic promiscuous immunogenic DNA/RNA sensor. In Gallus gallus (Chicken), this protein is High mobility group protein B3 (HMGB3).